The chain runs to 467 residues: Zinc finger protein 410 (467 aa).

Disordered stretches follow at residues 84-111 (PDGE…SLLQ) and 187-214 (NAKT…PLPQ). 5 consecutive C2H2-type zinc fingers follow at residues 219–243 (LKCT…LKTH), 249–273 (FICP…MRTH), 279–303 (FVCP…LRIH), 309–333 (FLCE…LVVH), and 339–362 (HQCQ…RKHH). Residues Cys-221, Cys-226, His-239, His-243, Cys-251, Cys-256, His-269, His-273, Cys-281, Cys-286, His-299, His-303, Cys-311, Cys-316, His-329, His-333, Cys-341, Cys-344, His-357, and His-361 each coordinate Zn(2+).

As to quaternary structure, interacts with CDKN2A/p14ARF. In terms of processing, O-glycosylated. O-GlcNAcylation may occur in response to increasing glucose levels and affect transcription factor activity. Sumoylated. Sumoylation increases its half-life, possibly by blocking ubiquitin-mediated degradation.

Its subcellular location is the nucleus. The protein localises to the chromosome. Transcription factor that binds to the sequence motif 5'-CATCCCATAATA-3', and is specifically required to silence expression of fetal hemoglobin in adult erythroid cells. Prevents expression of fetal hemoglobin genes HBG1 and HBG2 through CHD4: acts as a direct transcriptional activator of CHD4, a central component of the NuRD complex that represses transcription of fetal hemoglobin genes HBG1 and HBG2 in erythroid cells. May also activate transcription of matrix-remodeling genes such as MMP1 during fibroblast senescence. May activate transcription of the gap junction gene GJC1, perhaps in response to increasing glucose. However, recent studies suggest that ZNF410 is dedicated to regulate expression of a single gene: CHD4. The chain is Zinc finger protein 410 from Bos taurus (Bovine).